The following is a 422-amino-acid chain: Histidine--tRNA ligase (422 aa).

This sequence belongs to the class-II aminoacyl-tRNA synthetase family. In terms of assembly, homodimer.

It localises to the cytoplasm. It carries out the reaction tRNA(His) + L-histidine + ATP = L-histidyl-tRNA(His) + AMP + diphosphate + H(+). The chain is Histidine--tRNA ligase from Vibrio campbellii (strain ATCC BAA-1116).